Consider the following 410-residue polypeptide: Peptidase T (410 aa).

Histidine 79 is a Zn(2+) binding site. Residue aspartate 81 is part of the active site. Aspartate 142 contributes to the Zn(2+) binding site. Glutamate 176 serves as the catalytic Proton acceptor. The Zn(2+) site is built by glutamate 177, aspartate 199, and histidine 381.

Belongs to the peptidase M20B family. Requires Zn(2+) as cofactor.

The protein resides in the cytoplasm. The catalysed reaction is Release of the N-terminal residue from a tripeptide.. Cleaves the N-terminal amino acid of tripeptides. The protein is Peptidase T of Bacillus thuringiensis (strain Al Hakam).